The following is a 439-amino-acid chain: Dihydroorotate dehydrogenase (quinone), mitochondrial (439 aa).

The N-terminal 22 residues, 1–22 (MMHRVGFNVIGRRSFFTVNARR), are a transit peptide targeting the mitochondrion. Residues 37–53 (LTALLLAGSAGYLYFMN) form a helical membrane-spanning segment. FMN contacts are provided by residues 119–123 (AGLDK) and S143. Residue K123 participates in substrate binding. Substrate is bound at residue 168–172 (NRYGF). 2 residues coordinate FMN: N215 and N245. Residue 245 to 250 (NVSSPN) coordinates substrate. The Nucleophile role is filled by S248. FMN contacts are provided by K296 and S324. Substrate is bound at residue 325 to 326 (NT). Residues G350, G380, and 401 to 402 (YT) each bind FMN.

Belongs to the dihydroorotate dehydrogenase family. Type 2 subfamily. It depends on FMN as a cofactor.

It is found in the mitochondrion inner membrane. The enzyme catalyses (S)-dihydroorotate + a quinone = orotate + a quinol. Its pathway is pyrimidine metabolism; UMP biosynthesis via de novo pathway; orotate from (S)-dihydroorotate (quinone route): step 1/1. Catalyzes the conversion of dihydroorotate to orotate with quinone as electron acceptor. This Candida glabrata (strain ATCC 2001 / BCRC 20586 / JCM 3761 / NBRC 0622 / NRRL Y-65 / CBS 138) (Yeast) protein is Dihydroorotate dehydrogenase (quinone), mitochondrial (URA9).